The primary structure comprises 98 residues: uncharacterized protein (98 aa).

Belongs to the HesB/IscA family.

This is an uncharacterized protein from Staphylococcus epidermidis (strain ATCC 35984 / DSM 28319 / BCRC 17069 / CCUG 31568 / BM 3577 / RP62A).